We begin with the raw amino-acid sequence, 498 residues long: Probable malate:quinone oxidoreductase 2 (498 aa).

It belongs to the MQO family. It depends on FAD as a cofactor.

The catalysed reaction is (S)-malate + a quinone = a quinol + oxaloacetate. It functions in the pathway carbohydrate metabolism; tricarboxylic acid cycle; oxaloacetate from (S)-malate (quinone route): step 1/1. The sequence is that of Probable malate:quinone oxidoreductase 2 from Staphylococcus aureus (strain MW2).